A 341-amino-acid polypeptide reads, in one-letter code: Alanine racemase (341 aa).

Catalysis depends on Lys33, which acts as the Proton acceptor; specific for D-alanine. Lys33 is modified (N6-(pyridoxal phosphate)lysine). Arg126 serves as a coordination point for substrate. Tyr236 acts as the Proton acceptor; specific for L-alanine in catalysis. Substrate is bound at residue Met284.

The protein belongs to the alanine racemase family. It depends on pyridoxal 5'-phosphate as a cofactor.

It carries out the reaction L-alanine = D-alanine. It participates in amino-acid biosynthesis; D-alanine biosynthesis; D-alanine from L-alanine: step 1/1. Catalyzes the interconversion of L-alanine and D-alanine. This chain is Alanine racemase (alr), found in Aquifex pyrophilus.